The primary structure comprises 419 residues: UDP-N-acetylglucosamine 1-carboxyvinyltransferase (419 aa).

22–23 (KN) contributes to the phosphoenolpyruvate binding site. R93 serves as a coordination point for UDP-N-acetyl-alpha-D-glucosamine. Catalysis depends on C117, which acts as the Proton donor. C117 bears the 2-(S-cysteinyl)pyruvic acid O-phosphothioketal mark. UDP-N-acetyl-alpha-D-glucosamine is bound by residues D307 and I329.

This sequence belongs to the EPSP synthase family. MurA subfamily.

Its subcellular location is the cytoplasm. The catalysed reaction is phosphoenolpyruvate + UDP-N-acetyl-alpha-D-glucosamine = UDP-N-acetyl-3-O-(1-carboxyvinyl)-alpha-D-glucosamine + phosphate. It participates in cell wall biogenesis; peptidoglycan biosynthesis. Its function is as follows. Cell wall formation. Adds enolpyruvyl to UDP-N-acetylglucosamine. This chain is UDP-N-acetylglucosamine 1-carboxyvinyltransferase, found in Shewanella piezotolerans (strain WP3 / JCM 13877).